The sequence spans 436 residues: Suppressor of cytokine signaling 4 (436 aa).

A disordered region spans residues 1-25 (MAENNSKNVDVRPKTSRSRSADRKD). Positions 9-25 (VDVRPKTSRSRSADRKD) are enriched in basic and acidic residues. The SH2 domain maps to 283 to 378 (CYWGVMDKYA…FFEPLLSTPL (96 aa)). The SOCS box domain maps to 373–422 (LLSTPLIRTFPFSLQHICRTVICNCTTYDGIDALPIPSPMKLYLKEYHYK).

The protein operates within protein modification; protein ubiquitination. SOCS family proteins form part of a classical negative feedback system that regulates cytokine signal transduction. Substrate-recognition component of a SCF-like ECS (Elongin BC-CUL2/5-SOCS-box protein) E3 ubiquitin-protein ligase complex which mediates the ubiquitination and subsequent proteasomal degradation of target proteins. Inhibits EGF signaling by mediating the degradation of the Tyr-phosphorylated EGF receptor/EGFR. The polypeptide is Suppressor of cytokine signaling 4 (Socs4) (Mus musculus (Mouse)).